Here is a 572-residue protein sequence, read N- to C-terminus: MAGLTVRDPAVDRSLRSVFVGNIPYEATEEQLKDIFSEVGPVVSFRLVYDRETGKPKGYGFCEYQDQETALSAMRNLNGREFSGRALRVDNAASEKNKEELKSLGTGAPVIESPYGETISPEDAPESISKAVASLPPEQMFELMKQMKLCVQNSPQEARNMLLQNPQLAYALLQAQVVMRIVDPEIALKILHRQTNIPTLIAGNPQTVHSAGPGSGSSVSMNQQNPQTPQAQTLSGMHVNGAPPLMQASLQAGVAAPGQIPATVTGPGPGSLAPAGGMQAQVGMPGSGPVSMERGQVPMQDPRAAMQRGPLPANVPTPRGLLGDAPNDPRGGTLLSVTGEVEPRGYLGPPHQGPPMHHVPGHDSRGPPPHEMRGGPLTEPRPLMAEPRGPMIDQRGPPLDGRGGRDPRGIDARAMEARGLDARGLEARAMEARAMEARAMEARAMEARAMEVRGMEARSMDTRGPVPGPRGPMPSGIQGPSPINMGAVGPQGSRQVPVMQGAGMQGASIQGGGQPGGFSPGQNQVTPQDHEKAALIMQVLQLTADQIAMLPPEQRQSILILKEQIQKSTGAP.

Serine 14 bears the Phosphoserine mark. One can recognise an RRM domain in the interval 16–94; that stretch reads RSVFVGNIPY…RALRVDNAAS (79 aa). The interval 108–248 is interactions with CSTF3 and SYMPK; that stretch reads APVIESPYGE…VNGAPPLMQA (141 aa). Residue lysine 189 forms a Glycyl lysine isopeptide (Lys-Gly) (interchain with G-Cter in SUMO2) linkage. The segment at 208–230 is disordered; it reads VHSAGPGSGSSVSMNQQNPQTPQ. The residue at position 308 (arginine 308) is an Omega-N-methylarginine. A disordered region spans residues 322-382; that stretch reads LGDAPNDPRG…RGGPLTEPRP (61 aa). A compositionally biased stretch (basic and acidic residues) spans 360–373; the sequence is PGHDSRGPPPHEMR. The stretch at 410 to 414 is one 1; approximate repeat; the sequence is IDARA. The interval 410-464 is 11 X 5 AA tandem repeats of M-E-A-R-[AG]; that stretch reads IDARAMEARGLDARGLEARAMEARAMEARAMEARAMEARAMEVRGMEARSMDTRG. Repeat 2 spans residues 415–419; sequence MEARG. One copy of the 3; approximate repeat lies at 420-424; it reads LDARG. The stretch at 425–429 is one 4; approximate repeat; the sequence is LEARA. 4 consecutive repeat copies span residues 430–434, 435–439, 440–444, and 445–449. The stretch at 450-454 is one 9; approximate repeat; it reads MEVRG. Residues 455–459 form repeat 10; that stretch reads MEARS. Residues 460–464 form an 11; approximate repeat; the sequence is MDTRG. Omega-N-methylarginine is present on residues arginine 463 and arginine 470. An interaction with RPO2TC1 region spans residues 509–572; that stretch reads IQGGGQPGGF…EQIQKSTGAP (64 aa). Serine 519 bears the Phosphoserine mark.

In terms of assembly, the CSTF complex is composed of CSTF1 (50 kDa subunit), CSTF2 (64 kDa subunit) and CSTF3 (77 kDa subunit). CSTF2 directly interacts with CSTF3, SYMPK and RPO2TC1. Interacts with HSF1 in heat-stressed cells. Interacts with CPSF2, CPSF3 and FIP1L1. Interacts with DDX1.

The protein localises to the nucleus. One of the multiple factors required for polyadenylation and 3'-end cleavage of mammalian pre-mRNAs. This subunit is directly involved in the binding to pre-mRNAs. The sequence is that of Cleavage stimulation factor subunit 2 (CSTF2) from Bos taurus (Bovine).